The following is a 127-amino-acid chain: V-type proton ATPase subunit F (127 aa).

The protein belongs to the V-ATPase F subunit family. As to quaternary structure, V-ATPase is a heteromultimeric enzyme made up of two complexes: the ATP-hydrolytic V1 complex and the proton translocation V0 complex. The V1 complex consists of three catalytic AB heterodimers that form a heterohexamer, three peripheral stalks each consisting of EG heterodimers, one central rotor including subunits D and F, and the regulatory subunits C and H. The proton translocation complex V0 consists of the proton transport subunit a, a ring of proteolipid subunits c9c'', rotary subunit d, subunits e and f, and the accessory subunits VhaAC45 and ATP6AP2.

Subunit of the V1 complex of vacuolar(H+)-ATPase (V-ATPase), a multisubunit enzyme composed of a peripheral complex (V1) that hydrolyzes ATP and a membrane integral complex (V0) that translocates protons. V-ATPase is responsible for acidifying and maintaining the pH of intracellular compartments and in some cell types, is targeted to the plasma membrane, where it is responsible for acidifying the extracellular environment. The protein is V-type proton ATPase subunit F of Aedes aegypti (Yellowfever mosquito).